A 517-amino-acid chain; its full sequence is Maturase K (517 aa).

Belongs to the intron maturase 2 family. MatK subfamily.

It localises to the plastid. The protein resides in the chloroplast. Functionally, usually encoded in the trnK tRNA gene intron. Probably assists in splicing its own and other chloroplast group II introns. The sequence is that of Maturase K from Juncus effusus (Soft rush).